The following is a 186-amino-acid chain: Ribosome-recycling factor (186 aa).

The protein belongs to the RRF family.

The protein localises to the cytoplasm. Responsible for the release of ribosomes from messenger RNA at the termination of protein biosynthesis. May increase the efficiency of translation by recycling ribosomes from one round of translation to another. The protein is Ribosome-recycling factor of Amoebophilus asiaticus (strain 5a2).